Reading from the N-terminus, the 328-residue chain is 4-hydroxythreonine-4-phosphate dehydrogenase (328 aa).

Residues H134 and T135 each coordinate substrate. 3 residues coordinate a divalent metal cation: H164, H209, and H265. 3 residues coordinate substrate: K273, N282, and R291.

It belongs to the PdxA family. In terms of assembly, homodimer. Zn(2+) serves as cofactor. It depends on Mg(2+) as a cofactor. Co(2+) is required as a cofactor.

It is found in the cytoplasm. The enzyme catalyses 4-(phosphooxy)-L-threonine + NAD(+) = 3-amino-2-oxopropyl phosphate + CO2 + NADH. It functions in the pathway cofactor biosynthesis; pyridoxine 5'-phosphate biosynthesis; pyridoxine 5'-phosphate from D-erythrose 4-phosphate: step 4/5. Catalyzes the NAD(P)-dependent oxidation of 4-(phosphooxy)-L-threonine (HTP) into 2-amino-3-oxo-4-(phosphooxy)butyric acid which spontaneously decarboxylates to form 3-amino-2-oxopropyl phosphate (AHAP). The chain is 4-hydroxythreonine-4-phosphate dehydrogenase from Vibrio vulnificus (strain CMCP6).